Here is a 322-residue protein sequence, read N- to C-terminus: Reticulocalbin-1 (322 aa).

Residues 1 to 19 (MDVLGFICAVFLGTVVLHA) form the signal peptide. Residue asparagine 44 is glycosylated (N-linked (GlcNAc...) asparagine). 6 consecutive EF-hand domains span residues 70–105 (ESKD…VQKR), 106–141 (YVYE…YYLS), 157–192 (KMLP…EEFE), 194–229 (MKDI…HEDR), 235–270 (WVKT…QDYD), and 271–306 (HAQA…FVGS). Ca(2+) is bound by residues aspartate 83, aspartate 85, asparagine 87, tyrosine 89, glutamate 94, aspartate 119, asparagine 121, aspartate 123, lysine 125, glutamate 130, aspartate 170, aspartate 172, aspartate 174, glutamate 181, aspartate 207, asparagine 209, aspartate 211, histidine 213, glutamate 218, aspartate 248, asparagine 250, aspartate 252, lysine 254, glutamate 259, aspartate 284, aspartate 286, aspartate 288, methionine 290, and glutamate 295. Positions 319 to 322 (HDEL) match the Prevents secretion from ER motif.

This sequence belongs to the CREC family.

It localises to the endoplasmic reticulum lumen. Its function is as follows. May regulate calcium-dependent activities in the endoplasmic reticulum lumen or post-ER compartment. This chain is Reticulocalbin-1 (rcn1), found in Takifugu rubripes (Japanese pufferfish).